The following is a 475-amino-acid chain: Protein trichome birefringence-like 6 (475 aa).

A helical; Signal-anchor for type II membrane protein membrane pass occupies residues Val14–Ser34. The short motif at Gly211–Ser213 is the GDS motif element. A DCXHWCLPGXXDXWN motif motif is present at residues Asp450 to Asn464.

It belongs to the PC-esterase family. TBL subfamily.

The protein localises to the membrane. In terms of biological role, may act as a bridging protein that binds pectin and other cell wall polysaccharides. Probably involved in maintaining esterification of pectins. May be involved in the specific O-acetylation of cell wall polymers. The chain is Protein trichome birefringence-like 6 (TBL6) from Arabidopsis thaliana (Mouse-ear cress).